A 193-amino-acid chain; its full sequence is NAD(P)H-quinone oxidoreductase subunit I (193 aa).

4Fe-4S ferredoxin-type domains are found at residues 55 to 84 (GRIHFEFDKCIACEVCVRVCPINLPVVDWE) and 95 to 124 (KHYSIDFGVCIFCGNCVEYCPTNCLSMTEE). Positions 64, 67, 70, 74, 104, 107, 110, and 114 each coordinate [4Fe-4S] cluster. The tract at residues 169-193 (LDPHDLPSGNQRSGKRPEEIIAESD) is disordered.

The protein belongs to the complex I 23 kDa subunit family. As to quaternary structure, NDH-1 is composed of at least 11 different subunits. The cofactor is [4Fe-4S] cluster.

The protein resides in the cellular thylakoid membrane. The enzyme catalyses a plastoquinone + NADH + (n+1) H(+)(in) = a plastoquinol + NAD(+) + n H(+)(out). It catalyses the reaction a plastoquinone + NADPH + (n+1) H(+)(in) = a plastoquinol + NADP(+) + n H(+)(out). NDH-1 shuttles electrons from an unknown electron donor, via FMN and iron-sulfur (Fe-S) centers, to quinones in the respiratory and/or the photosynthetic chain. The immediate electron acceptor for the enzyme in this species is believed to be plastoquinone. Couples the redox reaction to proton translocation, and thus conserves the redox energy in a proton gradient. The polypeptide is NAD(P)H-quinone oxidoreductase subunit I (Rippkaea orientalis (strain PCC 8801 / RF-1) (Cyanothece sp. (strain PCC 8801))).